The sequence spans 253 residues: MARRKLVYEGKAKTLYEGPEPGTLVQYFKDDATAGNGEKRDVIDGKGVLNNRLSEFFMKGLGNIGVPTHFIKRLNMREQLIRAVEIIPLEVVVRNTAAGSICSRLGIEEGTPMPRPIVEFYFKNDDLNDPIVSEEHIIAFGWAAQQDLDDMVSLALRVNDFLSGLMLGVGIKLVDFKIEIGRIWDGDFMRLIVADEISPDSCRLWDIETGRKLDKDVFRRDLGDLADAYTEVAKRLGIMPQGPVGAIKPTLIN.

Belongs to the SAICAR synthetase family.

It carries out the reaction 5-amino-1-(5-phospho-D-ribosyl)imidazole-4-carboxylate + L-aspartate + ATP = (2S)-2-[5-amino-1-(5-phospho-beta-D-ribosyl)imidazole-4-carboxamido]succinate + ADP + phosphate + 2 H(+). The protein operates within purine metabolism; IMP biosynthesis via de novo pathway; 5-amino-1-(5-phospho-D-ribosyl)imidazole-4-carboxamide from 5-amino-1-(5-phospho-D-ribosyl)imidazole-4-carboxylate: step 1/2. This Jannaschia sp. (strain CCS1) protein is Phosphoribosylaminoimidazole-succinocarboxamide synthase.